The sequence spans 424 residues: Histidinol dehydrogenase (424 aa).

Residues Tyr121, Gln183, and Asn206 each contribute to the NAD(+) site. Substrate is bound by residues Ser229, Gln251, and His254. Zn(2+)-binding residues include Gln251 and His254. Catalysis depends on proton acceptor residues Glu319 and His320. Positions 320, 353, 407, and 412 each coordinate substrate. Residue Asp353 participates in Zn(2+) binding. His412 contributes to the Zn(2+) binding site.

This sequence belongs to the histidinol dehydrogenase family. Requires Zn(2+) as cofactor.

It catalyses the reaction L-histidinol + 2 NAD(+) + H2O = L-histidine + 2 NADH + 3 H(+). Its pathway is amino-acid biosynthesis; L-histidine biosynthesis; L-histidine from 5-phospho-alpha-D-ribose 1-diphosphate: step 9/9. Its function is as follows. Catalyzes the sequential NAD-dependent oxidations of L-histidinol to L-histidinaldehyde and then to L-histidine. This Halalkalibacterium halodurans (strain ATCC BAA-125 / DSM 18197 / FERM 7344 / JCM 9153 / C-125) (Bacillus halodurans) protein is Histidinol dehydrogenase.